A 286-amino-acid chain; its full sequence is Pantothenate synthetase (286 aa).

Met-30–His-37 is a binding site for ATP. His-37 acts as the Proton donor in catalysis. Position 61 (Gln-61) interacts with (R)-pantoate. Beta-alanine is bound at residue Gln-61. Gly-147–Asp-150 contacts ATP. (R)-pantoate is bound at residue Gln-153. ATP contacts are provided by residues Val-180 and Leu-188–Arg-191.

The protein belongs to the pantothenate synthetase family. Homodimer.

The protein localises to the cytoplasm. It catalyses the reaction (R)-pantoate + beta-alanine + ATP = (R)-pantothenate + AMP + diphosphate + H(+). It participates in cofactor biosynthesis; (R)-pantothenate biosynthesis; (R)-pantothenate from (R)-pantoate and beta-alanine: step 1/1. Its function is as follows. Catalyzes the condensation of pantoate with beta-alanine in an ATP-dependent reaction via a pantoyl-adenylate intermediate. The protein is Pantothenate synthetase of Novosphingobium aromaticivorans (strain ATCC 700278 / DSM 12444 / CCUG 56034 / CIP 105152 / NBRC 16084 / F199).